Reading from the N-terminus, the 190-residue chain is Peptidyl-tRNA hydrolase (190 aa).

Tyrosine 19 contacts tRNA. The Proton acceptor role is filled by histidine 24. TRNA is bound by residues tyrosine 72, asparagine 74, and asparagine 121.

The protein belongs to the PTH family.

The protein resides in the mitochondrion. The catalysed reaction is an N-acyl-L-alpha-aminoacyl-tRNA + H2O = an N-acyl-L-amino acid + a tRNA + H(+). In terms of biological role, peptidyl-tRNA hydrolase involved in the recycling of tRNA-Lys from diacetyl-lysyl-tRNA-Lys and is important for mitochondrial function. This Saccharomyces cerevisiae (strain ATCC 204508 / S288c) (Baker's yeast) protein is Peptidyl-tRNA hydrolase (PTH1).